We begin with the raw amino-acid sequence, 204 residues long: CASP-like protein 1B2 (204 aa).

The Cytoplasmic segment spans residues 1–28 (MASKGEEKPELVGSKQGIVSVTKAKHDQ). The helical transmembrane segment at 29 to 49 (IVLVLRVVAFLATASATIVMG) threads the bilayer. Residues 50-80 (LNQETKTLLVGTIGTTPIRATLKAKFQHTPA) are Extracellular-facing. A helical transmembrane segment spans residues 81–101 (FVFFVVANGLASVYNLVMLGV). Residues 102–114 (DVFGRKLDCKGLR) lie on the Cytoplasmic side of the membrane. A helical transmembrane segment spans residues 115-135 (LVIISILDMVIVAVVAAGASS). At 136-168 (AAFMAELGKNGNSHAKWNKICDKFESFCHQGGG) the chain is on the extracellular side. A helical membrane pass occupies residues 169-189 (ALIPSFIALLLLFLISAISII). The Cytoplasmic portion of the chain corresponds to 190-204 (TLHNQKLTSPHATTP).

The protein belongs to the Casparian strip membrane proteins (CASP) family. As to quaternary structure, homodimer and heterodimers.

The protein localises to the cell membrane. In Vitis vinifera (Grape), this protein is CASP-like protein 1B2.